A 484-amino-acid chain; its full sequence is Zinc metalloproteinase homolog-disintegrin albolatin (484 aa).

The signal sequence occupies residues 1-20 (MIQVLLVTICLAVFPYQGSS). Positions 21-191 (IILESGNVND…KTSQLNLPLL (171 aa)) are excised as a propeptide. N80, N251, and N301 each carry an N-linked (GlcNAc...) asparagine glycan. One can recognise a Peptidase M12B domain in the interval 194 to 392 (RCIELVMVAD…WTSYCLYNEP (199 aa)). Intrachain disulfides connect C305-C387, C345-C369, C347-C352, C403-C422, C414-C432, C416-C427, C426-C449, C440-C446, C445-C470, and C458-C477. Positions 400-484 (PPVCGNYYLE…GDCPWIGYYG (85 aa)) constitute a Disintegrin domain. A Cell attachment site; atypical (KGD) motif is present at residues 462-464 (KGD).

The protein belongs to the venom metalloproteinase (M12B) family. P-II subfamily. P-IIb sub-subfamily. Homodimer; disulfide-linked (disintegrin). In terms of tissue distribution, expressed by the venom gland.

Its subcellular location is the secreted. In terms of biological role, the function of this complete protein has not been studied, but it may be similar to the function of the disintegrin domain. A recombinant protein of this domain (409-484) inhibits collagen-induced human platelet aggregation, without having effect on ADP-induced aggregation. It may act either by blocking the binding of fibrinogen to the platelet receptor GPIIb/GPIIIa (ITGA2B/ITGB3) or by blocking the binding of collagen to the integrin alpha-2/beta-1 complex (ITGA2/ITGB1). The protein is Zinc metalloproteinase homolog-disintegrin albolatin of Trimeresurus albolabris (White-lipped pit viper).